A 100-amino-acid polypeptide reads, in one-letter code: Proline-rich protein 15-like protein (100 aa).

The disordered stretch occupies residues 26–100 (PDTYTQSEGG…LFDDREGKGQ (75 aa)). The span at 53–62 (RLEKIVDKNT) shows a compositional bias: basic and acidic residues.

Belongs to the PRR15 family.

In Bos taurus (Bovine), this protein is Proline-rich protein 15-like protein (PRR15L).